The primary structure comprises 457 residues: Angiopoietin-related protein 6 (457 aa).

The signal sequence occupies residues 1-24 (MGTARLRKLQLLLLLGAWRALGGA). 2 coiled-coil regions span residues 51 to 77 (DSEL…RAAE) and 126 to 164 (LLAE…QHSS). Positions 201–235 (SNTSRRLDQTPEHQREQSLRQQGPPSSLLPTGHLA) are disordered. An N-linked (GlcNAc...) asparagine glycan is attached at asparagine 202. Positions 205–218 (RRLDQTPEHQREQS) are enriched in basic and acidic residues. Residues 219–229 (LRQQGPPSSLL) are compositionally biased toward polar residues. Residues 238 to 456 (TRPVGPWRDC…KAVMLTRLVR (219 aa)) form the Fibrinogen C-terminal domain. Cystine bridges form between cysteine 247–cysteine 274 and cysteine 397–cysteine 410.

As to expression, highly expressed in the liver, specifically in hepatocytes, and weakly in the heart. Expressed in hematopoietic cells, platelets and mast cells, and detected at wounded skin.

It localises to the secreted. May play a role in the wound healing process. May promote epidermal proliferation, remodeling and regeneration. May promote the chemotactic activity of endothelial cells and induce neovascularization. May counteract high-fat diet-induced obesity and related insulin resistance through increased energy expenditure. This chain is Angiopoietin-related protein 6 (Angptl6), found in Mus musculus (Mouse).